The following is a 146-amino-acid chain: Large ribosomal subunit protein uL15 (146 aa).

Residues 1–62 (MRLHELRPKT…GQMPLQERLP (62 aa)) form a disordered region. A compositionally biased stretch (basic residues) spans 10–21 (TNYKKSRKRKGR). A compositionally biased stretch (gly residues) spans 42-52 (TGGGVRPGFEG).

This sequence belongs to the universal ribosomal protein uL15 family. Part of the 50S ribosomal subunit.

In terms of biological role, binds to the 23S rRNA. The chain is Large ribosomal subunit protein uL15 from Natranaerobius thermophilus (strain ATCC BAA-1301 / DSM 18059 / JW/NM-WN-LF).